Consider the following 244-residue polypeptide: Mediator of RNA polymerase II transcription subunit 19 (244 aa).

Disordered stretches follow at residues 1–56 and 171–244; these read MENF…PGAD and PKKK…SSLR. The span at 26-47 shows a compositional bias: pro residues; sequence GKPPPPPPPPAGGGPGTAPPPT. Positions 171-182 are enriched in basic residues; it reads PKKKNKHKHKQS. Ser-194 carries the post-translational modification Phosphoserine. Residues 212 to 224 show a composition bias toward basic residues; it reads KRKKKEKKKKKNR. Phosphoserine is present on Ser-226. Positions 234 to 244 are enriched in low complexity; it reads SSQASSSSSLR.

This sequence belongs to the Mediator complex subunit 19 family. In terms of assembly, component of the Mediator complex, which is composed of MED1, MED4, MED6, MED7, MED8, MED9, MED10, MED11, MED12, MED13, MED13L, MED14, MED15, MED16, MED17, MED18, MED19, MED20, MED21, MED22, MED23, MED24, MED25, MED26, MED27, MED29, MED30, MED31, CCNC, CDK8 and CDC2L6/CDK11. The MED12, MED13, CCNC and CDK8 subunits form a distinct module termed the CDK8 module. Mediator containing the CDK8 module is less active than Mediator lacking this module in supporting transcriptional activation. Individual preparations of the Mediator complex lacking one or more distinct subunits have been variously termed ARC, CRSP, DRIP, PC2, SMCC and TRAP.

The protein resides in the nucleus. Functionally, component of the Mediator complex, a coactivator involved in the regulated transcription of nearly all RNA polymerase II-dependent genes. Mediator functions as a bridge to convey information from gene-specific regulatory proteins to the basal RNA polymerase II transcription machinery. Mediator is recruited to promoters by direct interactions with regulatory proteins and serves as a scaffold for the assembly of a functional preinitiation complex with RNA polymerase II and the general transcription factors. The sequence is that of Mediator of RNA polymerase II transcription subunit 19 (MED19) from Homo sapiens (Human).